The following is a 64-amino-acid chain: Defensin beta 4A (64 aa).

Positions 1 to 23 (MRVLYLLFSFLFIFLMPLPGVFG) are cleaved as a signal peptide. Intrachain disulfides connect Cys-31/Cys-60, Cys-38/Cys-53, and Cys-43/Cys-61. The interval 33-48 (KNGAICHPVFCPRRYK) is phosphatidylinositol 4,5-bisphosphate (PIP2) binding.

The protein belongs to the beta-defensin family. LAP/TAP subfamily. In terms of assembly, monomer. Homodimer.

Its subcellular location is the secreted. Its function is as follows. Exhibits antimicrobial activity against Gram-negative bacteria and Gram-positive bacteria, with highest activity against Gram-negative bacteria. Antimicrobial activity against P.aruginosa seems to be salt-sensitive and is reduced with high salt concentrations greater than 25 mM. Also exhibits antimicrobial activity against the yeast C.albicans. Permeabilizes C.albicans cell membranes via targeting plasma membrane lipid phosphatidylinositol 4,5-bisphosphate (PIP2), thereby leading to cell fragmentation and cell death. Acts as a ligand for C-C chemokine receptor CCR6. Binds to CCR6 and induces chemotactic activity of CCR6-expressing cells, such as immature dendritic cells and memory T cells. This chain is Defensin beta 4A (DEFB4A), found in Macaca mulatta (Rhesus macaque).